The following is a 1760-amino-acid chain: Cilia- and flagella-associated protein 44 (1760 aa).

WD repeat units lie at residues 119 to 160, 163 to 202, 213 to 251, 276 to 315, and 388 to 427; these read GATK…MVLR, CHNT…TGLK, LEIS…CCFA, CHEG…VAEG, and FNGG…ELYK. The span at 1155 to 1165 shows a compositional bias: basic and acidic residues; the sequence is RQEEKLREQTA. The segment at 1155 to 1224 is disordered; it reads RQEEKLREQT…FGTAAARTRS (70 aa). Polar residues predominate over residues 1181 to 1190; that stretch reads PATNTDTSGA. A compositionally biased stretch (basic and acidic residues) spans 1194-1205; sequence ATRRSEGEDSRK. Positions 1348–1389 form a coiled coil; that stretch reads YDEARNSRDRCLREMEELQRLVQDQTASIEKLQEANKVFRRE. Residues 1420 to 1444 are disordered; the sequence is HSDMSGNDDDITSDDDDDDDMGEDE. Positions 1425–1444 are enriched in acidic residues; that stretch reads GNDDDITSDDDDDDDMGEDE.

The protein belongs to the CFAP44 family.

The protein resides in the cell projection. It is found in the cilium. The protein localises to the flagellum. It localises to the cytoplasm. Its subcellular location is the cytoskeleton. The protein resides in the flagellum axoneme. Flagellar protein involved in flagellum axoneme organization and function. The polypeptide is Cilia- and flagella-associated protein 44 (Trypanosoma brucei brucei (strain 927/4 GUTat10.1)).